The chain runs to 402 residues: Serine--glyoxylate aminotransferase (402 aa).

An N6-(pyridoxal phosphate)lysine modification is found at Lys201.

This sequence belongs to the class-V pyridoxal-phosphate-dependent aminotransferase family. Requires pyridoxal 5'-phosphate as cofactor.

The catalysed reaction is glyoxylate + L-serine = 3-hydroxypyruvate + glycine. It participates in one-carbon metabolism; formaldehyde assimilation via serine pathway. In Methylorubrum extorquens (strain ATCC 14718 / DSM 1338 / JCM 2805 / NCIMB 9133 / AM1) (Methylobacterium extorquens), this protein is Serine--glyoxylate aminotransferase.